Here is a 269-residue protein sequence, read N- to C-terminus: Cytolethal distending toxin subunit B homolog (269 aa).

The signal sequence occupies residues 1 to 22; sequence MKKPVFFLLTMIICSYISFACA.

Its subcellular location is the secreted. Its function is as follows. Produces a CDT (cytolethal distending toxin) activity, which causes DNA damage in intoxicated cells. This damage induces G2/M cell cycle arrest, chromatin fragmentation, cell distention and nucleus enlargement. This is Cytolethal distending toxin subunit B homolog (cdtB) from Salmonella typhi.